Here is a 317-residue protein sequence, read N- to C-terminus: tRNA dimethylallyltransferase (317 aa).

14–21 (GPTASGKS) lines the ATP pocket. Substrate is bound at residue 16 to 21 (TASGKS). Interaction with substrate tRNA regions lie at residues 39-42 (DSVL) and 163-167 (QRIQR).

The protein belongs to the IPP transferase family. In terms of assembly, monomer. Requires Mg(2+) as cofactor.

The enzyme catalyses adenosine(37) in tRNA + dimethylallyl diphosphate = N(6)-dimethylallyladenosine(37) in tRNA + diphosphate. Functionally, catalyzes the transfer of a dimethylallyl group onto the adenine at position 37 in tRNAs that read codons beginning with uridine, leading to the formation of N6-(dimethylallyl)adenosine (i(6)A). This chain is tRNA dimethylallyltransferase, found in Xylella fastidiosa (strain M23).